We begin with the raw amino-acid sequence, 636 residues long: Nucleolin 2 (636 aa).

Disordered stretches follow at residues 1-386 (MGKS…SKTL), 458-481 (ANER…SRTI), and 544-636 (SEIG…NDEE). Composition is skewed to basic and acidic residues over residues 43 to 63 (KELI…KKVE) and 76 to 89 (EKTK…KDES). Positions 90–103 (SSEEEDDSSSDEEI) are enriched in acidic residues. The span at 104 to 118 (APAKKRPEPIKKAKV) shows a compositional bias: basic and acidic residues. 3 stretches are compositionally biased toward acidic residues: residues 122–133 (SSDDDSTSDEET), 152–163 (SSDDDSSSDEET), and 182–193 (SSDDDSSSDEET). The segment covering 224 to 238 (TPAKKEPIVVKKDSS) has biased composition (basic and acidic residues). Composition is skewed to acidic residues over residues 267-278 (SSEEESSSDDEP), 299-311 (SSEE…ESDD), and 331-341 (SSDESSDESDK). Residues 342–367 (EESKDEKVTPKKKDSDVEMVDAEQKS) are compositionally biased toward basic and acidic residues. The span at 368–383 (NAKQPKTPTNQTQGGS) shows a compositional bias: polar residues. 2 consecutive RRM domains span residues 384–460 (KTLF…LANE) and 479–558 (RTIY…ESRP). Residues 464–481 (PRNSNPGRKGEGSQSRTI) show a composition bias toward polar residues. 2 stretches are compositionally biased toward basic and acidic residues: residues 552-566 (HVEE…EGRS) and 579-604 (RHSD…DRGA). Residues 622-636 (MESSKGTKTVFNDEE) show a composition bias toward polar residues.

In terms of assembly, interacts with THAL in the nucleus. As to expression, expressed at low levels in flower buds.

Its subcellular location is the nucleus. The protein localises to the nucleolus. In terms of biological role, involved in pre-rRNA processing and ribosome assembly. This chain is Nucleolin 2, found in Arabidopsis thaliana (Mouse-ear cress).